The chain runs to 61 residues: Disintegrin rubistatin (61 aa).

A Disintegrin domain is found at 1 to 61 (NPCCDAATCK…ADCPRNGLYG (61 aa)). Disulfide bonds link Cys3–Cys26, Cys17–Cys23, Cys22–Cys47, and Cys35–Cys54. A Cell attachment site; atypical (MVD) motif is present at residues 39–41 (MVD).

The protein belongs to the venom metalloproteinase (M12B) family. P-II subfamily. P-IIa sub-subfamily. Monomer. As to expression, expressed by the venom gland.

It is found in the secreted. Recombinant disintegrin rubistatin inhibits ADP-induced platelet aggregation. In addition, it strongly induces apoptosis, and inhibits cell migration and proliferation of the human cancer cell line SK-Mel-28. In Crotalus ruber ruber (Red diamond rattlesnake), this protein is Disintegrin rubistatin.